The chain runs to 102 residues: NADH-quinone oxidoreductase subunit K (102 aa).

A run of 3 helical transmembrane segments spans residues Leu-5 to Leu-25, Ile-31 to Phe-51, and Val-62 to Leu-82.

This sequence belongs to the complex I subunit 4L family. In terms of assembly, NDH-1 is composed of 14 different subunits. Subunits NuoA, H, J, K, L, M, N constitute the membrane sector of the complex.

It is found in the cell inner membrane. The enzyme catalyses a quinone + NADH + 5 H(+)(in) = a quinol + NAD(+) + 4 H(+)(out). NDH-1 shuttles electrons from NADH, via FMN and iron-sulfur (Fe-S) centers, to quinones in the respiratory chain. The immediate electron acceptor for the enzyme in this species is believed to be ubiquinone. Couples the redox reaction to proton translocation (for every two electrons transferred, four hydrogen ions are translocated across the cytoplasmic membrane), and thus conserves the redox energy in a proton gradient. The protein is NADH-quinone oxidoreductase subunit K of Paracidovorax citrulli (strain AAC00-1) (Acidovorax citrulli).